Consider the following 445-residue polypeptide: Alpha-1,3-mannosyl-glycoprotein 2-beta-N-acetylglucosaminyltransferase (445 aa).

The Cytoplasmic portion of the chain corresponds to 1 to 6 (MLKKQS). A helical; Signal-anchor for type II membrane protein transmembrane segment spans residues 7-29 (AGLVLWGAILFVAWNALLLLFFW). Residues 30–445 (TRPAPGRPPS…TWEGYDPSWN (416 aa)) lie on the Lumenal side of the membrane. A disulfide bond links cysteine 113 and cysteine 143. Positions 115, 142, 188, and 210 each coordinate substrate. Aspartate 211 contacts Mn(2+). An intrachain disulfide couples cysteine 237 to cysteine 303. Aspartate 289 functions as the Proton acceptor in the catalytic mechanism. Serine 320 is a binding site for substrate.

It belongs to the glycosyltransferase 13 family. In terms of assembly, interacts with MGAT4D. Interacts with BRI3 (isoforms 1 and 2); the interaction with isoform 2 is weaker than with isoform 1. It depends on Mn(2+) as a cofactor.

The protein localises to the golgi apparatus membrane. The protein resides in the cytoplasm. Its subcellular location is the perinuclear region. The catalysed reaction is N(4)-(alpha-D-Man-(1-&gt;3)-[alpha-D-Man-(1-&gt;3)-[alpha-D-Man-(1-&gt;6)]-alpha-D-Man-(1-&gt;6)]-beta-D-Man-(1-&gt;4)-beta-D-GlcNAc-(1-&gt;4)-beta-D-GlcNAc)-L-asparaginyl-[protein] (N-glucan mannose isomer 5A1,2) + UDP-N-acetyl-alpha-D-glucosamine = N(4)-{beta-D-GlcNAc-(1-&gt;2)-alpha-D-Man-(1-&gt;3)-[alpha-D-Man-(1-&gt;3)-[alpha-D-Man-(1-&gt;6)]-alpha-D-Man-(1-&gt;6)]-beta-D-Man-(1-&gt;4)-beta-D-GlcNAc-(1-&gt;4)-beta-D-GlcNAc}-L-asparaginyl-[protein] + UDP + H(+). Its pathway is protein modification; protein glycosylation. Its function is as follows. Initiates complex N-linked carbohydrate formation. Essential for the conversion of high-mannose to hybrid and complex N-glycans. This Homo sapiens (Human) protein is Alpha-1,3-mannosyl-glycoprotein 2-beta-N-acetylglucosaminyltransferase (MGAT1).